A 452-amino-acid polypeptide reads, in one-letter code: Adenosylmethionine-8-amino-7-oxononanoate aminotransferase (452 aa).

Gly-116–Ser-117 contributes to the pyridoxal 5'-phosphate binding site. Residue Tyr-152 coordinates substrate. Asp-257 is a binding site for pyridoxal 5'-phosphate. Residues Lys-286, Gly-321, and Arg-414 each coordinate substrate. Lys-286 carries the post-translational modification N6-(pyridoxal phosphate)lysine.

The protein belongs to the class-III pyridoxal-phosphate-dependent aminotransferase family. BioA subfamily. In terms of assembly, homodimer. It depends on pyridoxal 5'-phosphate as a cofactor.

Its subcellular location is the cytoplasm. The catalysed reaction is (8S)-8-amino-7-oxononanoate + S-adenosyl-L-methionine = S-adenosyl-4-methylsulfanyl-2-oxobutanoate + (7R,8S)-7,8-diammoniononanoate. It functions in the pathway cofactor biosynthesis; biotin biosynthesis; 7,8-diaminononanoate from 8-amino-7-oxononanoate (SAM route): step 1/1. Its function is as follows. Catalyzes the transfer of the alpha-amino group from S-adenosyl-L-methionine (SAM) to 7-keto-8-aminopelargonic acid (KAPA) to form 7,8-diaminopelargonic acid (DAPA). It is the only aminotransferase known to utilize SAM as an amino donor. This Staphylococcus aureus (strain NCTC 8325 / PS 47) protein is Adenosylmethionine-8-amino-7-oxononanoate aminotransferase.